The sequence spans 306 residues: Putative type I specificity subunit S.MpnORF285P (306 aa).

The protein belongs to the type-I restriction system S methylase family. In terms of assembly, the methyltransferase is composed of M and S polypeptides.

In terms of biological role, the specificity (S) subunit of a type I methyltransferase (MTase); this subunit dictates DNA sequence specificity. The single R subunit has multiple frameshifts and is probably not expressed. This chain is Putative type I specificity subunit S.MpnORF285P, found in Mycoplasma pneumoniae (strain ATCC 29342 / M129 / Subtype 1) (Mycoplasmoides pneumoniae).